Reading from the N-terminus, the 311-residue chain is uncharacterized protein (311 aa).

It belongs to the peptidase C1 family.

This is an uncharacterized protein from Acanthamoeba polyphaga mimivirus (APMV).